The sequence spans 397 residues: DNA-directed RNA polymerase subunit Rpo1C (397 aa).

Belongs to the RNA polymerase beta' chain family. Part of the RNA polymerase complex. An artificial construct of the RNAP clamp domain (including part of this protein) contacts transcription elongation factors Spt4 and Spt5.

Its subcellular location is the cytoplasm. It carries out the reaction RNA(n) + a ribonucleoside 5'-triphosphate = RNA(n+1) + diphosphate. Functionally, DNA-dependent RNA polymerase (RNAP) catalyzes the transcription of DNA into RNA using the four ribonucleoside triphosphates as substrates. Forms part of the jaw domain. The sequence is that of DNA-directed RNA polymerase subunit Rpo1C from Pyrococcus furiosus (strain ATCC 43587 / DSM 3638 / JCM 8422 / Vc1).